Reading from the N-terminus, the 396-residue chain is S-adenosylmethionine synthase (396 aa).

His-16 is a binding site for ATP. A Mg(2+)-binding site is contributed by Asp-18. Residue Glu-44 participates in K(+) binding. Residues Glu-57 and Gln-100 each coordinate L-methionine. Residues 100-110 (QSPDIAQGVDD) form a flexible loop region. ATP-binding positions include 174–176 (DAK), 241–242 (RF), Asp-250, 256–257 (RK), Ala-273, and Lys-277. Position 250 (Asp-250) interacts with L-methionine. L-methionine is bound at residue Lys-281.

Belongs to the AdoMet synthase family. Homotetramer; dimer of dimers. Requires Mg(2+) as cofactor. The cofactor is K(+).

Its subcellular location is the cytoplasm. The catalysed reaction is L-methionine + ATP + H2O = S-adenosyl-L-methionine + phosphate + diphosphate. The protein operates within amino-acid biosynthesis; S-adenosyl-L-methionine biosynthesis; S-adenosyl-L-methionine from L-methionine: step 1/1. Catalyzes the formation of S-adenosylmethionine (AdoMet) from methionine and ATP. The overall synthetic reaction is composed of two sequential steps, AdoMet formation and the subsequent tripolyphosphate hydrolysis which occurs prior to release of AdoMet from the enzyme. In Pediococcus pentosaceus (strain ATCC 25745 / CCUG 21536 / LMG 10740 / 183-1w), this protein is S-adenosylmethionine synthase.